The primary structure comprises 506 residues: UDP-glycosyltransferase eriJ (506 aa).

Belongs to the UDP-glycosyltransferase family.

The catalysed reaction is 11-O-acetylcyathatriol + UDP-alpha-D-xylose = erinacine Q + UDP + H(+). It catalyses the reaction 11-O-acetylcyathatriol + UDP-alpha-D-glucose = erinacine Q2 + UDP + H(+). Its pathway is secondary metabolite biosynthesis. Its function is as follows. UDP-glycosyltransferase; part of the gene cluster that mediates the biosynthesis of erinacines, cyathane-xylosides that show unique biological activities, including leishmanicidal activity, stimulating activity for nerve growth-factor synthesis, and agonistic activity toward the kappa opioid receptor. Within the pathway, eriJ tranfers xylose from UDP-xylose onto C-14 of 11-O-acetyl-cyathatriol to form eracine Q, and, at a lower rate, glucose from UDP-D-glucose to produce eracine Q2. The first step of the erinacines biosynthesis pathway is catalyzed by the geranylgeranyl diphosphate (GGPP) synthase eriE via conversion of farnesyl pyrophosphate and isopentyl pyrophosphate into geranylgeranyl pyrophosphate (GGPP). GGPP is then substrate of the diterpene cyclase eriG for the production of cyatha-3,12-diene. The cytochrome P450 monooxygenase eriI then hydroxylates cyatha-3,12-diene at C-14 of the seven-membered ring to produce erinacol, which is further hydroxylated at C-15 by the cytochrome P450 monooxygenase eriC to yield cyathadiol. The cytochrome P450 monooxygenase eriA then catalyzes C-11 hydroxylation in the presence of the short chain dehydrogenase/reductase (SDR) eriH, which leads to the production of cyathatriol. The acetyltransferase eriL converts cyathatriol into 11-O-acetyl-cyathatriol. The SDR eriH catalyzes further oxidation of 11-O-acetyl-cyathatriol into 1-O-acetylcyathin A3. Finally, the glycosyl transferase eriJ tranfers xylose from UDP-xylose onto C-14 of 11-O-acetyl-cyathatriol to form eracine Q. EriJ is also able to convert 11-O-acetyl-cyathatriol to eracine Q2 by using UDP-D-glucose as cosubstrate, but at a lower rate. In Hericium erinaceus (Lion's mane mushroom), this protein is UDP-glycosyltransferase eriJ.